The following is a 170-amino-acid chain: Cyclic pyranopterin monophosphate synthase (170 aa).

Substrate-binding positions include 89-91 (LCH) and 125-126 (ME). Asp-140 is an active-site residue.

It belongs to the MoaC family. Homohexamer; trimer of dimers.

The catalysed reaction is (8S)-3',8-cyclo-7,8-dihydroguanosine 5'-triphosphate = cyclic pyranopterin phosphate + diphosphate. Its pathway is cofactor biosynthesis; molybdopterin biosynthesis. Functionally, catalyzes the conversion of (8S)-3',8-cyclo-7,8-dihydroguanosine 5'-triphosphate to cyclic pyranopterin monophosphate (cPMP). The protein is Cyclic pyranopterin monophosphate synthase of Streptomyces coelicolor (strain ATCC BAA-471 / A3(2) / M145).